The primary structure comprises 371 residues: N-acetyldiaminopimelate deacetylase (371 aa).

Asp68 is a catalytic residue. Catalysis depends on Glu127, which acts as the Proton acceptor.

It belongs to the peptidase M20A family. N-acetyldiaminopimelate deacetylase subfamily.

The catalysed reaction is N-acetyl-(2S,6S)-2,6-diaminopimelate + H2O = (2S,6S)-2,6-diaminopimelate + acetate. It functions in the pathway amino-acid biosynthesis; L-lysine biosynthesis via DAP pathway; LL-2,6-diaminopimelate from (S)-tetrahydrodipicolinate (acetylase route): step 3/3. Functionally, catalyzes the conversion of N-acetyl-diaminopimelate to diaminopimelate and acetate. In Oceanobacillus iheyensis (strain DSM 14371 / CIP 107618 / JCM 11309 / KCTC 3954 / HTE831), this protein is N-acetyldiaminopimelate deacetylase.